Reading from the N-terminus, the 302-residue chain is tRNA pseudouridine synthase B (302 aa).

Catalysis depends on Asp-47, which acts as the Nucleophile.

This sequence belongs to the pseudouridine synthase TruB family. Type 1 subfamily.

The catalysed reaction is uridine(55) in tRNA = pseudouridine(55) in tRNA. In terms of biological role, responsible for synthesis of pseudouridine from uracil-55 in the psi GC loop of transfer RNAs. This is tRNA pseudouridine synthase B from Ruegeria sp. (strain TM1040) (Silicibacter sp.).